A 100-amino-acid polypeptide reads, in one-letter code: UPF0213 protein YhbQ (100 aa).

Residues 2 to 77 (TPWFLYLIRT…KQLTKRQKER (76 aa)) form the GIY-YIG domain.

Belongs to the UPF0213 family.

The protein is UPF0213 protein YhbQ of Escherichia coli O17:K52:H18 (strain UMN026 / ExPEC).